We begin with the raw amino-acid sequence, 693 residues long: Protein FAM13A (693 aa).

Ser19 is modified (phosphoserine). Disordered stretches follow at residues 56–89 (SNAGDQSSEDSEPGPSSASSIPTRQRGHQFKKQD) and 136–233 (RSKP…VPDM). The segment covering 69 to 78 (GPSSASSIPT) has biased composition (polar residues). Positions 159 to 171 (LSMESLSSMQSQE) are enriched in low complexity. Basic and acidic residues predominate over residues 184–197 (ESKEIERGGRDTQH). Ser267 and Ser287 each carry phosphoserine. 2 disordered regions span residues 302–331 (DTEVPPSPPNSHSFMRRRSSSLGSYDDEQE) and 396–424 (ISEEDLTPRTRQRSNTLPKSFGSQLEKED). Phosphoserine is present on Ser397. Phosphothreonine is present on Thr402. Positions 408–418 (RSNTLPKSFGS) are enriched in polar residues.

It belongs to the FAM13 family. Interacts with ANXA2. Expressed in the mammary gland, with similar levels at all stages of development, including pregnancy, lactation and involution.

(Microbial infection) Plays a role in the clearance of Pseudomonas aeruginosa by macrophages. In complex with ANXA2, promotes activation of Rho GTPases following P.aeruginosa infection. The sequence is that of Protein FAM13A (Fam13a) from Mus musculus (Mouse).